A 394-amino-acid chain; its full sequence is 1-deoxy-D-xylulose 5-phosphate reductoisomerase (394 aa).

NADPH-binding residues include T12, G13, S14, I15, K39, Q40, and N126. K127 contacts 1-deoxy-D-xylulose 5-phosphate. E128 provides a ligand contact to NADPH. D152 provides a ligand contact to Mn(2+). Positions 153, 154, 183, and 206 each coordinate 1-deoxy-D-xylulose 5-phosphate. E154 lines the Mn(2+) pocket. G212 contacts NADPH. 1-deoxy-D-xylulose 5-phosphate contacts are provided by S219, N224, K225, and E228. Residue E228 participates in Mn(2+) binding.

It belongs to the DXR family. It depends on Mg(2+) as a cofactor. The cofactor is Mn(2+).

The enzyme catalyses 2-C-methyl-D-erythritol 4-phosphate + NADP(+) = 1-deoxy-D-xylulose 5-phosphate + NADPH + H(+). It functions in the pathway isoprenoid biosynthesis; isopentenyl diphosphate biosynthesis via DXP pathway; isopentenyl diphosphate from 1-deoxy-D-xylulose 5-phosphate: step 1/6. In terms of biological role, catalyzes the NADPH-dependent rearrangement and reduction of 1-deoxy-D-xylulose-5-phosphate (DXP) to 2-C-methyl-D-erythritol 4-phosphate (MEP). The protein is 1-deoxy-D-xylulose 5-phosphate reductoisomerase of Neisseria meningitidis serogroup A / serotype 4A (strain DSM 15465 / Z2491).